Consider the following 660-residue polypeptide: PAN2-PAN3 deadenylation complex subunit PAN3 (660 aa).

The C3H1-type zinc-finger motif lies at 7 to 36 (SAKDTFCKNVLIYGYCKYENKGCAFSHTVK). Disordered regions lie at residues 36-60 (KPTSSVPGSQGSNATTNSSGNTNAD) and 150-186 (SPVMAQSVSTPGAKANGNIQHNPYLPGNAGTPQPTSA). Positions 43–59 (GSQGSNATTNSSGNTNA) are enriched in low complexity. The short motif at 59 to 79 (ADMKKKFNFNTPSFQPSTVPN) is the PABPC-interacting motif-2 (PAM-2) element. Residues 150–159 (SPVMAQSVST) are compositionally biased toward polar residues. A pseudokinase domain region spans residues 252–528 (QTLPRSNLPD…LQEFNRNHLS (277 aa)). ATP-binding positions include Arg304, 358–365 (DYFPNSNT), and 415–416 (SK). A coiled-coil region spans residues 529–567 (RRILNFCSNAQDSQDFMESQLSTELENARVFRLITKLNF). A knob domain region spans residues 568–660 (IIDRPEYDND…DSAFRTLTRG (93 aa)).

Belongs to the protein kinase superfamily. PAN3 family. Homodimer. Forms a heterotrimer with a catalytic subunit PAN2 to form the poly(A)-nuclease (PAN) deadenylation complex. Interacts (via PAM-2 motif) with poly(A)-binding protein PAB1 (via PABC domain), conferring substrate specificity of the enzyme complex.

The protein localises to the cytoplasm. Regulatory subunit of the poly(A)-nuclease (PAN) deadenylation complex, one of two cytoplasmic mRNA deadenylases involved in mRNA turnover. PAN specifically shortens poly(A) tails of RNA and the activity is stimulated by poly(A)-binding protein PAB1. PAN deadenylation is followed by rapid degradation of the shortened mRNA tails by the CCR4-NOT complex. Deadenylated mRNAs are then degraded by two alternative mechanisms, namely exosome-mediated 3'-5' exonucleolytic degradation, or deadenylation-dependent mRNA decaping and subsequent 5'-3' exonucleolytic degradation by XRN1. May also be involved in post-transcriptional maturation of mRNA poly(A) tails. PAN3 acts as a positive regulator for PAN activity, recruiting the catalytic subunit PAN2 to mRNA via its interaction with RNA and with PAB1. The chain is PAN2-PAN3 deadenylation complex subunit PAN3 from Debaryomyces hansenii (strain ATCC 36239 / CBS 767 / BCRC 21394 / JCM 1990 / NBRC 0083 / IGC 2968) (Yeast).